The chain runs to 295 residues: Fructose-bisphosphate aldolase class 1 (295 aa).

The Proton acceptor role is filled by Glu176. The Schiff-base intermediate with dihydroxyacetone-P role is filled by Lys213.

The protein belongs to the class I fructose-bisphosphate aldolase family.

The enzyme catalyses beta-D-fructose 1,6-bisphosphate = D-glyceraldehyde 3-phosphate + dihydroxyacetone phosphate. It functions in the pathway carbohydrate degradation; glycolysis; D-glyceraldehyde 3-phosphate and glycerone phosphate from D-glucose: step 4/4. This is Fructose-bisphosphate aldolase class 1 from Fusobacterium nucleatum subsp. nucleatum (strain ATCC 25586 / DSM 15643 / BCRC 10681 / CIP 101130 / JCM 8532 / KCTC 2640 / LMG 13131 / VPI 4355).